The sequence spans 138 residues: uncharacterized protein (138 aa).

Transmembrane regions (helical) follow at residues Leu8 to Pro28, Phe47 to Val67, and Thr82 to Ile102.

To U.parvum UU007, UU008 and UU041.

The protein resides in the cell membrane. This is an uncharacterized protein from Ureaplasma parvum serovar 3 (strain ATCC 700970).